Consider the following 242-residue polypeptide: Stress response regulator protein 1 (242 aa).

In terms of domain architecture, Response regulatory spans 118-236; that stretch reads NFLLVDDNFI…FDHIITCIEK (119 aa). A 4-aspartylphosphate modification is found at aspartate 169.

Its function is as follows. Required for stress adaptation, morphogenesis and virulence. The protein is Stress response regulator protein 1 (SRR1) of Debaryomyces hansenii (strain ATCC 36239 / CBS 767 / BCRC 21394 / JCM 1990 / NBRC 0083 / IGC 2968) (Yeast).